Consider the following 165-residue polypeptide: Lipoprotein signal peptidase (165 aa).

3 helical membrane-spanning segments follow: residues 12–32 (WLWVVVAVLIIDLGSKFLILQ), 70–90 (WFFAGIAVGICVVLAVLMYRS), and 102–122 (ALIIGGALGNLFDRLWHGFVV). Active-site residues include aspartate 123 and aspartate 141. The helical transmembrane segment at 137–157 (FNLADSAICIGAALIVLEGFL) threads the bilayer.

It belongs to the peptidase A8 family.

The protein localises to the cell inner membrane. It carries out the reaction Release of signal peptides from bacterial membrane prolipoproteins. Hydrolyzes -Xaa-Yaa-Zaa-|-(S,diacylglyceryl)Cys-, in which Xaa is hydrophobic (preferably Leu), and Yaa (Ala or Ser) and Zaa (Gly or Ala) have small, neutral side chains.. It functions in the pathway protein modification; lipoprotein biosynthesis (signal peptide cleavage). Its function is as follows. This protein specifically catalyzes the removal of signal peptides from prolipoproteins. The polypeptide is Lipoprotein signal peptidase (Klebsiella aerogenes (strain ATCC 13048 / DSM 30053 / CCUG 1429 / JCM 1235 / KCTC 2190 / NBRC 13534 / NCIMB 10102 / NCTC 10006 / CDC 819-56) (Enterobacter aerogenes)).